Reading from the N-terminus, the 142-residue chain is Endoribonuclease YbeY (142 aa).

3 residues coordinate Zn(2+): H107, H111, and D117.

Belongs to the endoribonuclease YbeY family. Zn(2+) serves as cofactor.

The protein resides in the cytoplasm. Functionally, single strand-specific metallo-endoribonuclease involved in late-stage 70S ribosome quality control and in maturation of the 3' terminus of the 16S rRNA. In Chlorobium phaeobacteroides (strain DSM 266 / SMG 266 / 2430), this protein is Endoribonuclease YbeY.